A 189-amino-acid polypeptide reads, in one-letter code: Ribosome maturation factor RimP (189 aa).

The protein belongs to the RimP family.

The protein localises to the cytoplasm. Required for maturation of 30S ribosomal subunits. This chain is Ribosome maturation factor RimP, found in Corynebacterium kroppenstedtii (strain DSM 44385 / JCM 11950 / CIP 105744 / CCUG 35717).